We begin with the raw amino-acid sequence, 180 residues long: Secreted RxLR effector protein 19 (180 aa).

A signal peptide spans 1–19; it reads MKLLLRALATFVLLNGVDS. The 147-residue stretch at 25-171 folds into the Jacalin-type lectin domain; it reads FQKCNVTGGP…IFALGALWGP (147 aa). Residues 52–77 carry the RxLR-dEER motif; the sequence is RALRLCGVDFVDGIGVTIWDLSVEEN.

This sequence belongs to the RxLR effector family.

It is found in the secreted. Its subcellular location is the host cytoplasm. The protein resides in the host nucleus. Its function is as follows. Effector that partially suppresses the tobacco programmed cell death induced by cell death-inducing proteins. This chain is Secreted RxLR effector protein 19, found in Plasmopara viticola (Downy mildew of grapevine).